The primary structure comprises 1342 residues: DNA-directed RNA polymerase subunit beta (1342 aa).

The protein belongs to the RNA polymerase beta chain family. The RNAP catalytic core consists of 2 alpha, 1 beta, 1 beta' and 1 omega subunit. When a sigma factor is associated with the core the holoenzyme is formed, which can initiate transcription.

It carries out the reaction RNA(n) + a ribonucleoside 5'-triphosphate = RNA(n+1) + diphosphate. Functionally, DNA-dependent RNA polymerase catalyzes the transcription of DNA into RNA using the four ribonucleoside triphosphates as substrates. The polypeptide is DNA-directed RNA polymerase subunit beta (Buchnera aphidicola subsp. Acyrthosiphon pisum (strain 5A)).